Here is a 319-residue protein sequence, read N- to C-terminus: ATP-dependent 6-phosphofructokinase (319 aa).

G11 is a binding site for ATP. 21–25 (RAVVR) is an ADP binding site. ATP contacts are provided by residues 72-73 (RC) and 102-105 (GDGS). D103 serves as a coordination point for Mg(2+). 125 to 127 (TID) is a binding site for substrate. The Proton acceptor role is filled by D127. Residue R154 participates in ADP binding. Substrate contacts are provided by residues R162 and 169–171 (MGR). ADP-binding positions include 185-187 (GAE), R211, and 213-215 (KKH). Residues E222, R243, and 249-252 (HIQR) each bind substrate.

It belongs to the phosphofructokinase type A (PFKA) family. ATP-dependent PFK group I subfamily. Prokaryotic clade 'B1' sub-subfamily. Homotetramer. Mg(2+) is required as a cofactor.

The protein localises to the cytoplasm. The enzyme catalyses beta-D-fructose 6-phosphate + ATP = beta-D-fructose 1,6-bisphosphate + ADP + H(+). Its pathway is carbohydrate degradation; glycolysis; D-glyceraldehyde 3-phosphate and glycerone phosphate from D-glucose: step 3/4. Its activity is regulated as follows. Allosterically activated by ADP and other diphosphonucleosides, and allosterically inhibited by phosphoenolpyruvate. Its function is as follows. Catalyzes the phosphorylation of D-fructose 6-phosphate to fructose 1,6-bisphosphate by ATP, the first committing step of glycolysis. In Bacillus licheniformis (strain ATCC 14580 / DSM 13 / JCM 2505 / CCUG 7422 / NBRC 12200 / NCIMB 9375 / NCTC 10341 / NRRL NRS-1264 / Gibson 46), this protein is ATP-dependent 6-phosphofructokinase.